Here is a 144-residue protein sequence, read N- to C-terminus: Large ribosomal subunit protein uL15 (144 aa).

Residues 1–57 form a disordered region; the sequence is MLLNTLSPAAGSKHAPKRLGRGVGSGLGKTGGRGHKGQKSRSGGKVRPGFEGGQMPL. The span at 21–31 shows a compositional bias: gly residues; it reads RGVGSGLGKTG. Over residues 32–44 the composition is skewed to basic residues; it reads GRGHKGQKSRSGG.

Belongs to the universal ribosomal protein uL15 family. Part of the 50S ribosomal subunit.

Binds to the 23S rRNA. This chain is Large ribosomal subunit protein uL15, found in Vibrio cholerae serotype O1 (strain ATCC 39541 / Classical Ogawa 395 / O395).